The sequence spans 1706 residues: MAARNSLTPQQGLGFFGLLILLCSAVLGKSQMCEVETGQTNIILDIEESRESFIGQPTTPPELPIFGDPDTEIALNLVFPKGQPIFQLNGKKLQLLQPLDRDEENLSHIVFQVSCTTRSTGKKRTIPIIVRVSDINDNAPRFMNTPYEVTVPESTPVGTTIFRNIQALDKDAGVNGLVEYFIAEGSPNSTNVEKYSADGYGTFAISFPHQGQVTVAKTLDFEKIQTYYLTIVASDRARNTADRLSSTTTLTVNIADSNDLDPSFIYSGCVSLDGACINPEYSASVPAGSLLGVLTVLPERIQAVDLDTINSPIRYSFASGMPGNYADYFQIDESTGVLKQTKAVDTSTAKKYDIIVKAEEVSPGPQRFTTAKLEIFVKPVDANPPVISSSQAEGYVDENSPIGTRVLDAHGNPISFMTTDADLSDSDPKPDYIYELTTPSFNVTGDGILVVNEENLDRDPPAPGRFKFQVVAREPRTNAASAPLSLTVHLRDVNDNAPKLAMVAPISITAGDQSESRLVTQVTATDNDEGPNAVVTYSIYHVSNNGIQKFTINATTGEIRTQGRLLAGEQYSITVQATDIGGLSSQAIVEVSVTPGPNTKPPRFQKPIYEVQVSEGAEINSTVTVVHAEDPENDAVVYSIISGNDLRQFAVGQESGVIIVIRKLDRESLTRYQLILKAEDTGGLSSSATVNIKVTDINDKNPEFEASTLPYVFQVEEGKAQASVGVVHATDADEGINAEITYSIPTDIPFTINATSGEILTAKELDYEQLNEYKFVVTAKDGAPDARLGTASVTVMVLDLPDEVPKFSDARIDVHIPENEENFLVATVQAFDPDSMPEITYVLRKGNAELFKVSEKSGEVRTIKGLDYESQKQHQLTIGTIENDGNGPGDTILLVVDVEDRNDLPPRFITVPDPVTVNDDQGIGTIIATLPAIDGDGTSPGNVVRYEIVGRGKAPKYFQVDPDTGAVRIRDELRKEEDTEYQVDIRAYDLGEPQLSSVAPLRVDVHHLLSSGNNEIKLDNKLESGTGMSSESIGLAFSDDSYTTSVPESMEANSTLKLIQIVNSKTSGDGPPAFRCEFVSGNGGGIFNLSSADHGCNLLLIQPLDFENKSSYSLQLRLTSHRYFVNPLKDTTSVEIIVQDENDNAPEFEFNRLRGQQDTFYTVVTEEMDVDTTILQVRATDRDSGKFGTVRYTLYDDDENRVNMPTSFFMMSEDTGVLRTAKHFKNENDFPLTFLVEARDSDGQEQGSHRTRARIVVNKLADINRMALSFPNAAPSDLRNYYTELEELLDKKTGLVSGIERMSSQKYLAKNGSVIENPAATDIWFYLIDPKTEQLVSRKDSIVETTLLEPAARSELNIALPRATAENISFPLERKEHVHKVKAAVAIDNEVFPFTLIAISLVILILGTIGIIYICISWSKYKNFKQRMRQYSSTNPPRYDPVIVNQQASSASETIANMKEYETQMLAMAVPPDVDDDLQLDFSAKNHAFSLDNVSYITHKENTNGGGQSSPSHSDATTATIATLRRHKNLNNASMNNNLAINNRQNTFNRTLEMNTRNNANPLASPPNGALSGTLTLGRIKHQNSNHYQNGAYNIDPTGPNNMAHAKNNAYSTMGRRGNTFGDVGLLNGNGELMNATLGRNGQLNNRLYGGEVPITNPLFQRSNSDHNHLSSTNENVSFGKRDYGQIGFSYLNDLDRSEVETTTEL.

The N-terminal stretch at 1–28 is a signal peptide; sequence MAARNSLTPQQGLGFFGLLILLCSAVLG. Residues 29-1395 lie on the Extracellular side of the membrane; it reads KSQMCEVETG…AIDNEVFPFT (1367 aa). Cadherin domains lie at 68 to 142, 143 to 264, 277 to 387, 388 to 500, 519 to 604, 605 to 704, 707 to 807, 808 to 908, 909 to 1005, 1038 to 1148, and 1156 to 1270; these read DPDT…APRF, MNTP…DPSF, INPE…PPVI, SSSQ…APKL, VTQV…PPRF, QKPI…NPEF, STLP…VPKF, SDAR…PPRF, ITVP…RVDV, SDDS…APEF, and QQDT…ALSF. 2 N-linked (GlcNAc...) asparagine glycosylation sites follow: asparagine 105 and asparagine 188. Asparagine 442, asparagine 553, asparagine 620, and asparagine 753 each carry an N-linked (GlcNAc...) asparagine glycan. Residues asparagine 1053, asparagine 1088, and asparagine 1108 are each glycosylated (N-linked (GlcNAc...) asparagine). N-linked (GlcNAc...) asparagine glycans are attached at residues asparagine 1311 and asparagine 1367. Residues 1396 to 1416 traverse the membrane as a helical segment; it reads LIAISLVILILGTIGIIYICI. The Cytoplasmic segment spans residues 1417 to 1706; it reads SWSKYKNFKQ…RSEVETTTEL (290 aa).

In terms of assembly, interacts (via the cytoplasmic domain) with ck. Interacts (via the cytoplasmic domain) with Cul1 and Ubr3.

The protein resides in the apical cell membrane. It is found in the endosome membrane. Its subcellular location is the cell projection. It localises to the microvillus membrane. Its function is as follows. Cadherin that functions in epithelial morphogenesis and the intestine epithelial immune response. Essential for female fertility. Regulates the length and organization of apical microvilli in developing follicle cells and salivary glands. Function in the follicle cell is essential for egg development as the microvilli secrete eggshell material such as the vitelline membrane. Acts at least in part by regulating the recruitment of the myosin ck to the follicle cell microvilli. Also required to regulate cell rearrangements during salivary tube elongation, possibly by modulating cellular adhesion between the apical surface and apical extracellular matrix during epithelial tube elongation. May also function in cellular adhesion during the development of other tubular epithelia such as the trachea. Possibly functions as an apical membrane determinant which acts in apical membrane expansion during salivary and tracheal epithelial tube elongation. In salivary gland development, this function is independent of the other apical membrane determinants crb and sas. Essential downstream component of a hh-signaling pathway which regulates the Duox-dependent gut epithelial immune response to bacterial uracil; required for endosome formation in the enterocyte and activating norpA-dependent Ca2+ mobilization, which are essential steps in the Duox-dependent production of reactive oxygen species (ROS) in response to intestinal bacterial infection. The sequence is that of Cadherin-99C from Drosophila melanogaster (Fruit fly).